Consider the following 150-residue polypeptide: Arginine repressor (150 aa).

The protein belongs to the ArgR family.

The protein localises to the cytoplasm. The protein operates within amino-acid biosynthesis; L-arginine biosynthesis [regulation]. Its function is as follows. Regulates arginine biosynthesis genes. This chain is Arginine repressor, found in Clostridium acetobutylicum (strain ATCC 824 / DSM 792 / JCM 1419 / IAM 19013 / LMG 5710 / NBRC 13948 / NRRL B-527 / VKM B-1787 / 2291 / W).